A 217-amino-acid polypeptide reads, in one-letter code: Putative 3-methyladenine DNA glycosylase (217 aa).

Residues 105–145 enclose the RPE2 insert domain; it reads SHNNVYTIDTAKIKSQITDEKTQSIIIRKNRRIMKFYIPNL.

This sequence belongs to the DNA glycosylase MPG family.

This Rickettsia prowazekii (strain Madrid E) protein is Putative 3-methyladenine DNA glycosylase.